The chain runs to 62 residues: Protein DsrB (62 aa).

The protein belongs to the DsrB family.

The sequence is that of Protein DsrB from Shigella flexneri serotype 5b (strain 8401).